Consider the following 376-residue polypeptide: TraB domain-containing protein (376 aa).

An N-acetylmethionine modification is found at Met-1. Positions 1 to 34 are disordered; it reads MDGEEQQPPHEANVEPVVPSEASEPVPRVLSGDP. Residues 14-27 show a composition bias toward low complexity; it reads VEPVVPSEASEPVP. A Phosphothreonine modification is found at Thr-65.

In Homo sapiens (Human), this protein is TraB domain-containing protein (TRABD).